Consider the following 121-residue polypeptide: Large ribosomal subunit protein bL12 (121 aa).

The protein belongs to the bacterial ribosomal protein bL12 family. Homodimer. Part of the ribosomal stalk of the 50S ribosomal subunit. Forms a multimeric L10(L12)X complex, where L10 forms an elongated spine to which 2 to 4 L12 dimers bind in a sequential fashion. Binds GTP-bound translation factors.

Functionally, forms part of the ribosomal stalk which helps the ribosome interact with GTP-bound translation factors. Is thus essential for accurate translation. The protein is Large ribosomal subunit protein bL12 of Shewanella baltica (strain OS185).